The following is a 602-amino-acid chain: Probable translation initiation factor IF-2 (602 aa).

Residues 18–233 (LRTPIVCVMG…LVGLAQRFLK (216 aa)) enclose the tr-type G domain. The interval 27 to 34 (GHVDHGKT) is G1. 27–34 (GHVDHGKT) is a binding site for GTP. A G2 region spans residues 52–56 (AITQH). A G3 region spans residues 88 to 91 (DTPG). GTP is bound by residues 88–92 (DTPGH) and 142–145 (NKID). The segment at 142–145 (NKID) is G4. A G5 region spans residues 210-212 (SAI).

It belongs to the TRAFAC class translation factor GTPase superfamily. Classic translation factor GTPase family. IF-2 subfamily.

In terms of biological role, function in general translation initiation by promoting the binding of the formylmethionine-tRNA to ribosomes. Seems to function along with eIF-2. This Methanothrix thermoacetophila (strain DSM 6194 / JCM 14653 / NBRC 101360 / PT) (Methanosaeta thermophila) protein is Probable translation initiation factor IF-2.